The sequence spans 150 residues: Ribosomal RNA large subunit methyltransferase H (150 aa).

S-adenosyl-L-methionine is bound by residues Leu68, Gly97, and Leu116–Leu121.

This sequence belongs to the RNA methyltransferase RlmH family. In terms of assembly, homodimer.

The protein resides in the cytoplasm. The catalysed reaction is pseudouridine(1915) in 23S rRNA + S-adenosyl-L-methionine = N(3)-methylpseudouridine(1915) in 23S rRNA + S-adenosyl-L-homocysteine + H(+). Functionally, specifically methylates the pseudouridine at position 1915 (m3Psi1915) in 23S rRNA. The sequence is that of Ribosomal RNA large subunit methyltransferase H from Prochlorococcus marinus (strain MIT 9303).